The chain runs to 97 residues: Essential MCU regulator, mitochondrial (97 aa).

The N-terminal 37 residues, 1 to 37, are a transit peptide targeting the mitochondrion; that stretch reads MAARMGVLSVAGFRAAARAGGLLARPKQSTAVVPCRT. Over 38–55 the chain is Mitochondrial matrix; that stretch reads VIASSAGAILPKPEKVSF. A helical membrane pass occupies residues 56–75; it reads GLLRVFTVVIPFLYIGTLIS. Topologically, residues 76-97 are mitochondrial intermembrane; sequence KNFAAVLEEHDIFVPEDDDDDD.

This sequence belongs to the SMDT1/EMRE family. Component of the uniplex complex.

It localises to the mitochondrion inner membrane. Essential regulatory subunit of the mitochondrial calcium uniporter complex (uniplex), a complex that mediates calcium uptake into mitochondria. Required to bridge the calcium-sensing proteins micu1 with the calcium-conducting subunit mcu. Acts by mediating activation of mcu and retention of micu1 to the mcu pore, in order to ensure tight regulation of the uniplex complex and appropriate responses to intracellular calcium signaling. The protein is Essential MCU regulator, mitochondrial of Xenopus laevis (African clawed frog).